Reading from the N-terminus, the 265-residue chain is Diphthine synthase (265 aa).

S-adenosyl-L-methionine contacts are provided by residues leucine 10, aspartate 87, valine 90, 115–116 (SI), leucine 166, alanine 209, and histidine 234.

The protein belongs to the diphthine synthase family. Homodimer.

It catalyses the reaction 2-[(3S)-amino-3-carboxypropyl]-L-histidyl-[translation elongation factor 2] + 3 S-adenosyl-L-methionine = diphthine-[translation elongation factor 2] + 3 S-adenosyl-L-homocysteine + 3 H(+). Its pathway is protein modification; peptidyl-diphthamide biosynthesis. Functionally, S-adenosyl-L-methionine-dependent methyltransferase that catalyzes the trimethylation of the amino group of the modified target histidine residue in translation elongation factor 2 (EF-2), to form an intermediate called diphthine. The three successive methylation reactions represent the second step of diphthamide biosynthesis. The chain is Diphthine synthase from Pyrococcus horikoshii (strain ATCC 700860 / DSM 12428 / JCM 9974 / NBRC 100139 / OT-3).